We begin with the raw amino-acid sequence, 401 residues long: Multidrug resistance protein MdtH (401 aa).

The Cytoplasmic portion of the chain corresponds to 1-12 (MSRVSQARNLGK). The chain crosses the membrane as a helical span at residues 13–33 (YFLLIDNMLVVLGFFVVFPLV). Topologically, residues 34–98 (SIRFVDQMGW…GFATMGIAHE (65 aa)) are periplasmic. Residues 99–116 (PWLLWFSCLLSGLGGTLF) form a helical membrane-spanning segment. Residues 117-137 (DPPRSALVVKLMPQQRGRFFS) are Cytoplasmic-facing. Residues 138 to 158 (LLMMQDSAGAVIGALLGSWLL) form a helical membrane-spanning segment. Over 159–163 (QYDFR) the chain is Periplasmic. A helical membrane pass occupies residues 164-184 (LVCATGAVLFVLCAAFNAWLL). At 185-212 (PAWKLSTIRTPVREGMTRVMRDKRFVTY) the chain is on the cytoplasmic side. A helical transmembrane segment spans residues 213 to 233 (VLTLAGYYMLAVQVMLMLPIM). The Periplasmic segment spans residues 234–242 (VNDVAGAPS). The helical transmembrane segment at 243-263 (AVKWMYAIEACLSLTLLYPIA) threads the bilayer. The Cytoplasmic portion of the chain corresponds to 264 to 275 (RWSEKHFRLEHR). A helical membrane pass occupies residues 276 to 296 (LMAGLLIMSLSMMPVGMVSGL). The Periplasmic segment spans residues 297-298 (QQ). A helical membrane pass occupies residues 299–319 (LFTLICLFYIGSIIAEPARET). At 320 to 338 (LSASLADARARGSYMGFSR) the chain is on the cytoplasmic side. A helical membrane pass occupies residues 339-359 (LGLAIGGTIGYIGGGWLFDLG). Residues 360–366 (KSAHQPE) are Periplasmic-facing. The helical transmembrane segment at 367–387 (LPWMMLGIIGIFTFLALGWQF) threads the bilayer. Over 388 to 401 (SQKRAARRLLERDA) the chain is Cytoplasmic.

This sequence belongs to the major facilitator superfamily. DHA1 family. MdtH (TC 2.A.1.2.21) subfamily.

It is found in the cell inner membrane. The chain is Multidrug resistance protein MdtH from Shigella dysenteriae serotype 1 (strain Sd197).